A 372-amino-acid polypeptide reads, in one-letter code: Glutamate 5-kinase (372 aa).

An ATP-binding site is contributed by K14. Positions 54, 141, and 153 each coordinate substrate. Position 173–174 (173–174 (TD)) interacts with ATP. In terms of domain architecture, PUA spans 280-358 (RGNVTLDEGA…DEIESLLGYI (79 aa)).

It belongs to the glutamate 5-kinase family.

The protein resides in the cytoplasm. The enzyme catalyses L-glutamate + ATP = L-glutamyl 5-phosphate + ADP. It functions in the pathway amino-acid biosynthesis; L-proline biosynthesis; L-glutamate 5-semialdehyde from L-glutamate: step 1/2. Functionally, catalyzes the transfer of a phosphate group to glutamate to form L-glutamate 5-phosphate. In Nitrosospira multiformis (strain ATCC 25196 / NCIMB 11849 / C 71), this protein is Glutamate 5-kinase.